The following is a 403-amino-acid chain: CinA-like protein (403 aa).

It belongs to the CinA family.

The protein is CinA-like protein of Petrotoga mobilis (strain DSM 10674 / SJ95).